A 338-amino-acid chain; its full sequence is UPF0252 protein PF1496 (338 aa).

The helical transmembrane segment at 100–120 (ILSMLFLVFILFPAFTSHIWS) threads the bilayer.

It belongs to the UPF0252 family.

It localises to the membrane. The sequence is that of UPF0252 protein PF1496 from Pyrococcus furiosus (strain ATCC 43587 / DSM 3638 / JCM 8422 / Vc1).